The sequence spans 228 residues: Phosphoribosylformylglycinamidine synthase subunit PurQ (228 aa).

The 224-residue stretch at 2-225 (KAAVISFPGS…INQTEGADVR (224 aa)) folds into the Glutamine amidotransferase type-1 domain. The Nucleophile role is filled by Cys86. Active-site residues include His194 and Glu196.

Part of the FGAM synthase complex composed of 1 PurL, 1 PurQ and 2 PurS subunits.

The protein resides in the cytoplasm. The catalysed reaction is N(2)-formyl-N(1)-(5-phospho-beta-D-ribosyl)glycinamide + L-glutamine + ATP + H2O = 2-formamido-N(1)-(5-O-phospho-beta-D-ribosyl)acetamidine + L-glutamate + ADP + phosphate + H(+). It catalyses the reaction L-glutamine + H2O = L-glutamate + NH4(+). It participates in purine metabolism; IMP biosynthesis via de novo pathway; 5-amino-1-(5-phospho-D-ribosyl)imidazole from N(2)-formyl-N(1)-(5-phospho-D-ribosyl)glycinamide: step 1/2. In terms of biological role, part of the phosphoribosylformylglycinamidine synthase complex involved in the purines biosynthetic pathway. Catalyzes the ATP-dependent conversion of formylglycinamide ribonucleotide (FGAR) and glutamine to yield formylglycinamidine ribonucleotide (FGAM) and glutamate. The FGAM synthase complex is composed of three subunits. PurQ produces an ammonia molecule by converting glutamine to glutamate. PurL transfers the ammonia molecule to FGAR to form FGAM in an ATP-dependent manner. PurS interacts with PurQ and PurL and is thought to assist in the transfer of the ammonia molecule from PurQ to PurL. In Lacticaseibacillus casei (strain BL23) (Lactobacillus casei), this protein is Phosphoribosylformylglycinamidine synthase subunit PurQ.